The primary structure comprises 108 residues: uncharacterized protein (108 aa).

Polar residues predominate over residues 1-15 (MSDSNSRLVYSTQTG). The segment at 1–29 (MSDSNSRLVYSTQTGRIEEPKTAPVRPKG) is disordered. Positions 16 to 29 (RIEEPKTAPVRPKG) are enriched in basic and acidic residues.

It belongs to the SUI1 family.

This is an uncharacterized protein from Salmonella typhi.